The following is a 301-amino-acid chain: Peptidyl-prolyl cis-trans isomerase E (301 aa).

Residues 5–83 enclose the RRM domain; the sequence is KRVLYVGGLA…GRTIRVNLAK (79 aa). 3 positions are modified to phosphoserine: Ser91, Ser97, and Ser119. The interval 107 to 140 is disordered; sequence GKTLEENKEEEGSEPPKAETQEGEPAAKKARSNP. Residues 143–299 form the PPIase cyclophilin-type domain; that stretch reads YMDIKIGNKP…QKVIIADCGE (157 aa).

Belongs to the cyclophilin-type PPIase family. PPIase E subfamily. As to quaternary structure, identified in the spliceosome C complex. Component of the XAB2 complex, a multimeric protein complex composed of XAB2, PRPF19, AQR, ZNF830, ISY1, and PPIE. Identified in a pentameric intron-binding (IB) complex composed of AQR, XAB2, ISY1, ZNF830 and PPIE that is incorporated into the spliceosome as a preassembled complex. The IB complex does not contain PRPF19. Interacts (via RNA-binding domain) with KMT2A (via the third PHD-type zinc-finger).

Its subcellular location is the nucleus. It carries out the reaction [protein]-peptidylproline (omega=180) = [protein]-peptidylproline (omega=0). In terms of biological role, involved in pre-mRNA splicing as component of the spliceosome. Combines RNA-binding and PPIase activities. Binds mRNA and has a preference for single-stranded RNA molecules with poly-A and poly-U stretches, suggesting it binds to the poly(A)-region in the 3'-UTR of mRNA molecules. Catalyzes the cis-trans isomerization of proline imidic peptide bonds in proteins. Inhibits KMT2A activity; this requires proline isomerase activity. This is Peptidyl-prolyl cis-trans isomerase E (PPIE) from Pongo abelii (Sumatran orangutan).